A 97-amino-acid polypeptide reads, in one-letter code: MEITEVRVFPVNEEKLKAYVTITLDDCFVVRDLKVIHGNTGLFIAMPAKRRKDGTFKDIAHPLNTETRERMERTILAEYDRELRKGAAPRPTGTHDD.

This sequence belongs to the SpoVG family.

Its function is as follows. Could be involved in septation. The sequence is that of Putative septation protein SpoVG from Anaeromyxobacter sp. (strain Fw109-5).